The chain runs to 266 residues: MGLLSVDLLITLQILPVFFSNCLFLALYDSVILLKHVALLLSRSKSTRGEWRRMLTSEGLRCVWNSFLLDAYKQVKLGEDAPNSSVVHVSNPEAGNNCASEKTADGAECHLLDFASAERPLVVNFGSATUPPFTRQLPAFRQLVEEFSSVADFLLVYIDEAHPSDGWAVPGDSSMSFEVKKHRNQEDRCAAAHQLLERFSLPPQCQVVADRMDNNANVAYGVAFERVCIVQRRKIAYLGGKGPFSYNLQEVRSWLEKNFSKRUILD.

The Lumenal segment spans residues 1 to 9 (MGLLSVDLL). A helical; Signal-anchor for type III membrane protein membrane pass occupies residues 10–34 (ITLQILPVFFSNCLFLALYDSVILL). The Cytoplasmic segment spans residues 35 to 266 (KHVALLLSRS…KNFSKRUILD (232 aa)). Residue U130 is part of the active site. Residues U130 and U263 are each a non-standard amino acid (selenocysteine).

The protein belongs to the iodothyronine deiodinase family. Predominantly monomer. Can form homodimers but homodimerization is not essential for enzyme activity. Interacts with USP20 and USP33. Interacts with MARCHF6. Ubiquitinated by MARCHF6, leading to its degradation by the proteasome. Deubiquitinated by USP20 and USP33. In terms of tissue distribution, expressed in cerebral cortex, cerebellum, pituitary gland, mostly in anterior pituitary gland, and pineal gland, as well as in brown adipose tissue (BAT).

It localises to the endoplasmic reticulum membrane. The enzyme catalyses 3,3',5-triiodo-L-thyronine + iodide + A + H(+) = L-thyroxine + AH2. It carries out the reaction 3,3'-diiodo-L-thyronine + iodide + A + H(+) = 3,3',5'-triiodo-L-thyronine + AH2. The catalysed reaction is 3'-iodo-L-thyronine + iodide + A + H(+) = 3',5'-diiodo-L-thyronine + AH2. It catalyses the reaction 3,3'-diiodothyronamine + iodide + A + H(+) = 3,3',5'-triiodothyronamine + AH2. The enzyme catalyses 3'-iodothyronamine + iodide + A + H(+) = 3',5'-diiodothyronamine + AH2. In terms of biological role, plays a crucial role in the metabolism of thyroid hormones (TH) and has specific roles in TH activation and inactivation by deiodination. Catalyzes the deiodination of L-thyroxine (T4) to 3,5,3'-triiodothyronine (T3) and 3',5'-diiodothyronine (3',5'-T2) to 3'-monoiodothyronine (3'-T1) via outer-ring deiodination (ORD). Catalyzes the deiodination of 3,3',5'-triiodothyronine (rT3) to 3,3'-diiodothyronine (3,3'-T2) via ORD. Catalyzes the phenolic ring deiodinations of 3,3',5'-triiodothyronamine and 3',5'- diiodothyronamine. The chain is Type II iodothyronine deiodinase (Dio2) from Rattus norvegicus (Rat).